The following is a 195-amino-acid chain: Phosphoheptose isomerase (195 aa).

One can recognise an SIS domain in the interval 35-195; it reads LCVALYRGDK…EKEIFGDGVN (161 aa). 51–53 is a binding site for substrate; the sequence is NGG. Positions 60 and 64 each coordinate Zn(2+). Substrate is bound by residues E64, 93–94, 119–121, S124, and Q171; these read ND and STS. 2 residues coordinate Zn(2+): Q171 and H179.

It belongs to the SIS family. GmhA subfamily. Homotetramer. Requires Zn(2+) as cofactor.

The protein resides in the cytoplasm. It carries out the reaction 2 D-sedoheptulose 7-phosphate = D-glycero-alpha-D-manno-heptose 7-phosphate + D-glycero-beta-D-manno-heptose 7-phosphate. It functions in the pathway carbohydrate biosynthesis; D-glycero-D-manno-heptose 7-phosphate biosynthesis; D-glycero-alpha-D-manno-heptose 7-phosphate and D-glycero-beta-D-manno-heptose 7-phosphate from sedoheptulose 7-phosphate: step 1/1. In terms of biological role, catalyzes the isomerization of sedoheptulose 7-phosphate in D-glycero-D-manno-heptose 7-phosphate. The sequence is that of Phosphoheptose isomerase from Sulfurimonas denitrificans (strain ATCC 33889 / DSM 1251) (Thiomicrospira denitrificans (strain ATCC 33889 / DSM 1251)).